Consider the following 160-residue polypeptide: Eosinophil cationic protein (160 aa).

The signal sequence occupies residues 1–27; sequence MVPKLFTSQICLLLLLGLMGVEGSLHA. The required for nearly all of the bactericidal activities; partially involved in LPS-binding stretch occupies residues 28–72; it reads RPPQFTRAQWFAIQHISLNPPRCTIAMRVINNYRWRCKNQNTFLR. His42 serves as the catalytic Proton acceptor. Cystine bridges form between Cys50/Cys110, Cys64/Cys123, Cys82/Cys138, and Cys89/Cys98. Tyr60 carries the post-translational modification 3'-nitrotyrosine. 65–69 is a binding site for substrate; the sequence is KNQNT. 3 N-linked (GlcNAc...) asparagine glycosylation sites follow: Asn84, Asn92, and Asn119. His155 functions as the Proton donor in the catalytic mechanism.

This sequence belongs to the pancreatic ribonuclease family. As to quaternary structure, interacts with bacterial lipopolysaccharide (LPS) and lipoteichoic acid (LTA). In vitro interacts with phospholipid bilayers.

Its subcellular location is the secreted. Functionally, cytotoxin and helminthotoxin with low-efficiency ribonuclease activity. Possesses a wide variety of biological activities. Exhibits antibacterial activity. This Gorilla gorilla gorilla (Western lowland gorilla) protein is Eosinophil cationic protein (RNASE3).